A 510-amino-acid polypeptide reads, in one-letter code: DNA nucleotidylexotransferase (510 aa).

The interval 1 to 22 (MDPLQAVHLGPRKKRPRQLGTP) is disordered. The short motif at 11 to 17 (PRKKRPR) is the Nuclear localization signal element. Residues 27–124 (PYDIRFRDLV…KPVEMMGRHQ (98 aa)) form the BRCT domain. Ser134 bears the Phosphoserine mark. Positions 151-510 (SQYACQRRTT…DYIEPWERNA (360 aa)) are mediates interaction with DNTTIP2. An involved in DNA binding region spans residues 258–262 (VGLKT). A 2'-deoxyribonucleoside 5'-triphosphate-binding positions include 333–338 (GFRRGK) and 342–345 (HDVD). The Mg(2+) site is built by Asp343, Asp345, and Asp434. Residue 449-450 (GW) coordinates a 2'-deoxyribonucleoside 5'-triphosphate.

The protein belongs to the DNA polymerase type-X family. In terms of assembly, interacts with PRP19 and DNTTIP1. Forms a ternary complex with DNTTIP2 and core histone. Released from this complex by PCNA. Interacts with TRERF1. Mg(2+) is required as a cofactor. In terms of tissue distribution, isoform TDT-L: Expressed in the thymus, and, at lower levels, in the bone marrow. Detected in both cycling and noncycling pro-B and pre-B cells (at protein level). Isoform TDT-S: Expressed in both cycling and noncycling pro-B, but not pre-B, cells (at protein level). Not detected in mature peripheral or germinal center B cells.

It is found in the nucleus. The protein localises to the cytoplasm. The catalysed reaction is DNA(n) + a 2'-deoxyribonucleoside 5'-triphosphate = DNA(n+1) + diphosphate. Functionally, transferase that catalyzes the nontemplated addition of nucleoside triphosphate to coding ends during V(D)J recombination (N addition). Involved in the generation of diversity in the antigen-binding region of immunoglobulin heavy and light chains and T-cell receptors during B- and T-cell development. Does not act on double-stranded DNA with blunt ends. In terms of biological role, 3'-to-5' DNA exonuclease. Involved in the generation of diversity in the antigen-binding region of immunoglobulin heavy and light chains and T-cell receptors during B- and T-cell development. Acts on single-stranded and double-stranded DNA with 3' or 5' extensions, but not on double-stranded DNA with blunt ends. Attenuates not only isoform TDT-S-catalyzed N addition, but also P (palindromic) addition in coding joins. Lacks terminal transferase activity. The polypeptide is DNA nucleotidylexotransferase (Dntt) (Mus musculus (Mouse)).